The chain runs to 433 residues: MLRIITQQADVKAELQRICDRTHDEQVLHKEATVREVLQAVKRQGDKAVLHYTDEFDNQILKAEELRVTGSELDAAYQQVSQELLEAIQLASRQIEAFHRQRVPKSWVHFGDDDIVLGKRYTPIDRAGLYVPGGRAAYVSTVLMNAIPARVAGVPRIVIATPPGAQKAINPAVLVAAQEVGVQEIYRVGGAQAIAALAYGTETIPKVDVITGPGNIYVTLAKKLVYGNVGIDSLAGPSEVLIIADEGANPVHVATDMLAQAEHDPMAAAILFTTDPALAKNVQVAVERQLVDHPRRIDTEKAIAHYGLIVLVESLDAAAELSNEFAPEHLELEVKDPWAVLPNIRHAGAIFLGYSTPEAVGDYLAGPNHTLPTSGAARYASALSVETFLKHSSIIQYSQTALNKVAGAIDALATAEGLPSHADSVKRRIQQDE.

NAD(+)-binding residues include Tyr-130, Gln-192, and Asn-215. Substrate-binding residues include Ser-238, Gln-260, and His-263. Gln-260 and His-263 together coordinate Zn(2+). Residues Glu-328 and His-329 each act as proton acceptor in the active site. The substrate site is built by His-329, Asp-362, Glu-416, and His-421. Position 362 (Asp-362) interacts with Zn(2+). Zn(2+) is bound at residue His-421.

The protein belongs to the histidinol dehydrogenase family. The cofactor is Zn(2+).

The catalysed reaction is L-histidinol + 2 NAD(+) + H2O = L-histidine + 2 NADH + 3 H(+). It participates in amino-acid biosynthesis; L-histidine biosynthesis; L-histidine from 5-phospho-alpha-D-ribose 1-diphosphate: step 9/9. Its function is as follows. Catalyzes the sequential NAD-dependent oxidations of L-histidinol to L-histidinaldehyde and then to L-histidine. This is Histidinol dehydrogenase 2 (hisD2) from Nostoc sp. (strain PCC 7120 / SAG 25.82 / UTEX 2576).